A 322-amino-acid polypeptide reads, in one-letter code: Undecaprenyl-phosphate 4-deoxy-4-formamido-L-arabinose transferase (322 aa).

The Cytoplasmic segment spans residues 1 to 235 (MFEIHPVKKV…TCLTTTPLRM (235 aa)). A helical membrane pass occupies residues 236 to 256 (LSLLGSIIAIGGFSIAVLLVI). Residues 257–269 (LRLTFGPQWAAEG) lie on the Periplasmic side of the membrane. Residues 270–290 (VFMLFAVLFTFIGAQFIGMGL) form a helical membrane-spanning segment. The Cytoplasmic portion of the chain corresponds to 291-322 (LGEYIGRIYTDVRARPRYFVQQVIRPSSKENE).

It belongs to the glycosyltransferase 2 family.

It localises to the cell inner membrane. The catalysed reaction is UDP-4-deoxy-4-formamido-beta-L-arabinose + di-trans,octa-cis-undecaprenyl phosphate = 4-deoxy-4-formamido-alpha-L-arabinopyranosyl di-trans,octa-cis-undecaprenyl phosphate + UDP. The protein operates within glycolipid biosynthesis; 4-amino-4-deoxy-alpha-L-arabinose undecaprenyl phosphate biosynthesis; 4-amino-4-deoxy-alpha-L-arabinose undecaprenyl phosphate from UDP-4-deoxy-4-formamido-beta-L-arabinose and undecaprenyl phosphate: step 1/2. Its pathway is bacterial outer membrane biogenesis; lipopolysaccharide biosynthesis. In terms of biological role, catalyzes the transfer of 4-deoxy-4-formamido-L-arabinose from UDP to undecaprenyl phosphate. The modified arabinose is attached to lipid A and is required for resistance to polymyxin and cationic antimicrobial peptides. In Escherichia coli O139:H28 (strain E24377A / ETEC), this protein is Undecaprenyl-phosphate 4-deoxy-4-formamido-L-arabinose transferase.